The following is a 197-amino-acid chain: MAEREQRGGRDQRGGGRERKEREERDSEFVDKLVHINRVAKVVKGGKRFGFAALVVIGDQKGRAGFGHGKAREVPEAIRKATESAKRNLTRVSLREGRTLHHDIAGRHGAGRVYLRAAPAGTGIIAGGPMRAVFETLGVQDVVAKSIGSSNPYNMVRATFDALKHQDSPRSVAARRNIKVSTLQSRRIGGDAEAAAD.

The disordered stretch occupies residues 1-27; the sequence is MAEREQRGGRDQRGGGRERKEREERDS. The S5 DRBM domain occupies 29–92; that stretch reads FVDKLVHINR…ESAKRNLTRV (64 aa).

It belongs to the universal ribosomal protein uS5 family. In terms of assembly, part of the 30S ribosomal subunit. Contacts proteins S4 and S8.

With S4 and S12 plays an important role in translational accuracy. In terms of biological role, located at the back of the 30S subunit body where it stabilizes the conformation of the head with respect to the body. The sequence is that of Small ribosomal subunit protein uS5 from Bradyrhizobium diazoefficiens (strain JCM 10833 / BCRC 13528 / IAM 13628 / NBRC 14792 / USDA 110).